A 20-amino-acid chain; its full sequence is Thrombin-like enzyme Cdc SII (20 aa).

The protein belongs to the peptidase S1 family. Snake venom subfamily. As to quaternary structure, monomer. In terms of tissue distribution, expressed by the venom gland.

It is found in the secreted. Strongly inhibited by PMSF and moderately inhibited by leupeptin. Not inhibited by EDTA, aprotinin, pepstatin, and bestatin. In terms of biological role, thrombin-like snake venom serine protease that coagulates human plasma and bovine fibrinogen by hydrolysis of the alpha chains (FGA) (minimum coagulation dose is 60 ug on fibrinogen). Has fibrinogenolytic activities, and degrades preferentially the Aalpha chain (FGA). Shows amidolytic activity toward N-benzoyl-L-Arg-p-nitroanilide, has a higher activity than Cdc SI. In vivo, intravenous injection induces defibrin(ogen)ation and a loss of the righting reflex and opisthotoxins, together with a typical gyroxin-like effect (18-20 minutes). Subcutaneous injection into the footpads induces moderate edema. Potentiates local hemorrhagic activity induced by metalloproteinases (BaP1). The sequence is that of Thrombin-like enzyme Cdc SII from Crotalus durissus cumanensis (South American rattlesnake).